The sequence spans 231 residues: Ribose-5-phosphate isomerase A (231 aa).

Substrate contacts are provided by residues 31–34, 86–89, and 100–103; these read TGST, DGAD, and KGLG. Glu-109 serves as the catalytic Proton acceptor. Lys-127 contacts substrate.

This sequence belongs to the ribose 5-phosphate isomerase family. As to quaternary structure, homodimer.

The catalysed reaction is aldehydo-D-ribose 5-phosphate = D-ribulose 5-phosphate. Its pathway is carbohydrate degradation; pentose phosphate pathway; D-ribose 5-phosphate from D-ribulose 5-phosphate (non-oxidative stage): step 1/1. In terms of biological role, catalyzes the reversible conversion of ribose-5-phosphate to ribulose 5-phosphate. This is Ribose-5-phosphate isomerase A from Gluconobacter oxydans (strain 621H) (Gluconobacter suboxydans).